We begin with the raw amino-acid sequence, 639 residues long: Probable serine/threonine-protein kinase DDB_G0282777 (639 aa).

Residues 7–122 (LKENKESLKD…EDLKSIILTS (116 aa)) adopt a coiled-coil conformation. Positions 233–588 (MHMVGDIKKG…SNNNQNHTNI (356 aa)) constitute a Protein kinase domain. ATP-binding positions include 239–247 (IKKGSISSD) and K284. D439 (proton acceptor) is an active-site residue. The tract at residues 601 to 639 (NTLETSTTNPNTNTTTSDTNTSTTSTTNTNTTTSNTITA) is disordered.

This sequence belongs to the protein kinase superfamily. Ser/Thr protein kinase family.

It carries out the reaction L-seryl-[protein] + ATP = O-phospho-L-seryl-[protein] + ADP + H(+). The catalysed reaction is L-threonyl-[protein] + ATP = O-phospho-L-threonyl-[protein] + ADP + H(+). This is Probable serine/threonine-protein kinase DDB_G0282777 from Dictyostelium discoideum (Social amoeba).